Consider the following 352-residue polypeptide: MVFRIASSPYTHNQRQTSRIMLLVVIAALPGIAAQTWFFGWGTLFQIVLAAITALVAEAIVLRLRKQSVASHLQDYSALLTGLLLAVSIPPLAPWWMVVLGTGFAIIIAKQLYGGLGQNPFNPAMIGYVVLLISFPVQMTSWLPPYEIAATTPDMLDTLRMIFTGHTASGGDMTLLRIGIDGISQATPLDTFKTSLRAGHSVEQIMQYPIYSGALAGVGWQWVNLAWLVGGVFLLWQKAIRWHIPVSFLLTLALCAALGWLFSPATLASPQLHLLSGATMLGAFFILTDPVTASTTNRGRLIFGALAGVLVWLIRSFGGYPDGVAFAVLLANITVPLIDYYTRPRVYGHRKG.

4 helical membrane passes run 20–40 (IMLL…WFFG), 42–62 (GTLF…AIVL), 69–91 (VASH…SIPP), and 123–143 (PAMI…TSWL). Position 187 is an FMN phosphoryl threonine (T187). The next 5 helical transmembrane spans lie at 215-235 (LAGV…VFLL), 242-262 (WHIP…GWLF), 267-287 (LASP…FFIL), 301-321 (LIFG…GGYP), and 322-342 (DGVA…DYYT).

It belongs to the NqrB/RnfD family. As to quaternary structure, the complex is composed of six subunits: RsxA, RsxB, RsxC, RsxD, RsxE and RsxG. The cofactor is FMN.

Its subcellular location is the cell inner membrane. In terms of biological role, part of a membrane-bound complex that couples electron transfer with translocation of ions across the membrane. Required to maintain the reduced state of SoxR. The protein is Ion-translocating oxidoreductase complex subunit D of Salmonella agona (strain SL483).